We begin with the raw amino-acid sequence, 136 residues long: Nucleoside diphosphate kinase (136 aa).

The ATP site is built by lysine 10, phenylalanine 58, arginine 86, threonine 92, arginine 104, and asparagine 114. Residue histidine 117 is the Pros-phosphohistidine intermediate of the active site.

It belongs to the NDK family. In terms of assembly, homotetramer. The cofactor is Mg(2+).

Its subcellular location is the cytoplasm. The catalysed reaction is a 2'-deoxyribonucleoside 5'-diphosphate + ATP = a 2'-deoxyribonucleoside 5'-triphosphate + ADP. It catalyses the reaction a ribonucleoside 5'-diphosphate + ATP = a ribonucleoside 5'-triphosphate + ADP. Its function is as follows. Major role in the synthesis of nucleoside triphosphates other than ATP. The ATP gamma phosphate is transferred to the NDP beta phosphate via a ping-pong mechanism, using a phosphorylated active-site intermediate. In Corynebacterium jeikeium (strain K411), this protein is Nucleoside diphosphate kinase.